We begin with the raw amino-acid sequence, 525 residues long: MNKSNSMNNTSLERLFQQLVLGLDGIPLMDVHWLIYVAFGAWLCSYVIHVLSSSSTVKVPVVGYRSVFEPTWLLRLRFVWEGGSIIGQGYNKFKDSIFQVRKLGTDIVIIPPNFIDEVRKLSQDKTRSVEPFINDFAGQYTRGMVFLQSDLQNRVIQQRLTPKLVSLTKVMKEELDYALTKEIPDMKDDEWVEVDISSIMVRLISRISARVFLGPEHCRNQEWLTNTAEYSESLFITGFILRVVPHILRPFIAPLLPSYRTLLRNVSSGRRVIGDIIRSQQGDGNEDILSWMRDAATGEEKQIDNIAQRMLILSLASIHTTAMTMTHAMYDLCARPEYIEPLRDEVKGVVDASGWDKTALNRLHRLDSFLKESQRFNPVFLLTFNRIYHQSMTLSDGTNLPSGTRIAVPSHAMLQDSAHVPGPTPPTEFDGFRYSKIRSDSNYAQKYLFSMTDSSNMAFGYGKYACPGRFYASNEMKLTLAILLLQFEFKLPDGKGRPRNITIDSDMIPDPRARLCVRKRSLRDE.

The helical transmembrane segment at Val31–Leu51 threads the bilayer. Cys466 contributes to the heme binding site.

This sequence belongs to the cytochrome P450 family. Requires heme as cofactor.

It localises to the membrane. It catalyses the reaction ent-kaur-16-ene + 3 reduced [NADPH--hemoprotein reductase] + 3 O2 = ent-kaur-16-en-19-oate + 3 oxidized [NADPH--hemoprotein reductase] + 4 H2O + 4 H(+). The protein operates within plant hormone biosynthesis; gibberellin biosynthesis. Functionally, catalyzes three successive oxidations of the 4-methyl group of ent-kaurene giving kaurenoic acid, a key step in gibberellin (GA) biosynthesis. In Gibberella intermedia (Bulb rot disease fungus), this protein is Ent-kaurene oxidase (CYP503A1).